Here is a 378-residue protein sequence, read N- to C-terminus: Putative F-box only protein 15 (378 aa).

The 48-residue stretch at 5-52 folds into the F-box domain; sequence KRVYRSLPFELVEEILKKTPAESLNRFKSTCKQWYGIITSKRFMYNHL.

The polypeptide is Putative F-box only protein 15 (FBX15) (Arabidopsis thaliana (Mouse-ear cress)).